A 138-amino-acid polypeptide reads, in one-letter code: UPF0047 protein YjbQ (138 aa).

Belongs to the UPF0047 family.

This is UPF0047 protein YjbQ (yjbQ) from Escherichia coli O157:H7.